Here is a 357-residue protein sequence, read N- to C-terminus: MKKINKIALAVGGSGGHIVPALATRETFCKEGIDVLLLGKGLDNYPNLCEQDIPYREIPSGSLSISRPIAAIRNTRSLYIGYKKAKKELIAFGPDVVIGFGSYHSLPVLMAALKKKIPIFLHEQNLVPGKVNKLFSRFAKGVGVSFSPVTKQFSCPAQEVFLPKRVWASSNSSKELSSSYSPIICVVGGSQGAKTLNDNVPPALVKVAKDYPNMYVHHIAGPKGEVASIQYVYSRGGVSFCVKHFEHDMLNILLSSDLVISRAGATILDELLWAQTPSILIPYPGAYGHQEENAKFLVYTIGGGSMILEKQLSNEVLTKNILLALDSKTIKNRREALRAYYQNKSSKSFYQFICECL.

UDP-N-acetyl-alpha-D-glucosamine contacts are provided by residues 14 to 16 (SGG), N125, S190, and Q290.

It belongs to the glycosyltransferase 28 family. MurG subfamily.

The protein localises to the cell inner membrane. The catalysed reaction is di-trans,octa-cis-undecaprenyl diphospho-N-acetyl-alpha-D-muramoyl-L-alanyl-D-glutamyl-meso-2,6-diaminopimeloyl-D-alanyl-D-alanine + UDP-N-acetyl-alpha-D-glucosamine = di-trans,octa-cis-undecaprenyl diphospho-[N-acetyl-alpha-D-glucosaminyl-(1-&gt;4)]-N-acetyl-alpha-D-muramoyl-L-alanyl-D-glutamyl-meso-2,6-diaminopimeloyl-D-alanyl-D-alanine + UDP + H(+). Its pathway is cell wall biogenesis; peptidoglycan biosynthesis. In terms of biological role, cell wall formation. Catalyzes the transfer of a GlcNAc subunit on undecaprenyl-pyrophosphoryl-MurNAc-pentapeptide (lipid intermediate I) to form undecaprenyl-pyrophosphoryl-MurNAc-(pentapeptide)GlcNAc (lipid intermediate II). This Chlamydia felis (strain Fe/C-56) (Chlamydophila felis) protein is UDP-N-acetylglucosamine--N-acetylmuramyl-(pentapeptide) pyrophosphoryl-undecaprenol N-acetylglucosamine transferase.